Here is a 147-residue protein sequence, read N- to C-terminus: Diuretic hormone 45 (147 aa).

The first 26 residues, 1 to 26, serve as a signal peptide directing secretion; sequence MMWWAVWCAAMVAGSVFTAAAPPTDS. The propeptide occupies 27–84; the sequence is IDLMQMDPSLADDESLGFAMQSLSGRYAAAPWLYLLADVSHDPQRMAEFSQSSGRARP. Valine 131 is modified (valine amide). A propeptide spanning residues 135 to 147 is cleaved from the precursor; it reads GAWGEPASYLYNN.

The protein belongs to the sauvagine/corticotropin-releasing factor/urotensin I family.

It is found in the secreted. Regulation of fluid secretion. The chain is Diuretic hormone 45 (dh45) from Bombyx mori (Silk moth).